Here is a 347-residue protein sequence, read N- to C-terminus: Protein pelota homolog (347 aa).

This sequence belongs to the eukaryotic release factor 1 family. Pelota subfamily. As to quaternary structure, monomer. A divalent metal cation serves as cofactor.

The protein localises to the cytoplasm. Functionally, may function in recognizing stalled ribosomes, interact with stem-loop structures in stalled mRNA molecules, and effect endonucleolytic cleavage of the mRNA. May play a role in the release non-functional ribosomes and degradation of damaged mRNAs. Has endoribonuclease activity. This Methanocaldococcus jannaschii (strain ATCC 43067 / DSM 2661 / JAL-1 / JCM 10045 / NBRC 100440) (Methanococcus jannaschii) protein is Protein pelota homolog.